The chain runs to 270 residues: Acyl-[acyl-carrier-protein]--UDP-N-acetylglucosamine O-acyltransferase (270 aa).

Belongs to the transferase hexapeptide repeat family. LpxA subfamily. In terms of assembly, homotrimer.

Its subcellular location is the cytoplasm. It catalyses the reaction a (3R)-hydroxyacyl-[ACP] + UDP-N-acetyl-alpha-D-glucosamine = a UDP-3-O-[(3R)-3-hydroxyacyl]-N-acetyl-alpha-D-glucosamine + holo-[ACP]. It functions in the pathway glycolipid biosynthesis; lipid IV(A) biosynthesis; lipid IV(A) from (3R)-3-hydroxytetradecanoyl-[acyl-carrier-protein] and UDP-N-acetyl-alpha-D-glucosamine: step 1/6. Functionally, involved in the biosynthesis of lipid A, a phosphorylated glycolipid that anchors the lipopolysaccharide to the outer membrane of the cell. This chain is Acyl-[acyl-carrier-protein]--UDP-N-acetylglucosamine O-acyltransferase, found in Helicobacter pylori (strain J99 / ATCC 700824) (Campylobacter pylori J99).